The sequence spans 1039 residues: Protein male-specific lethal-1 (1039 aa).

Residues 1 to 13 (MDKRFKWPPKKRA) are compositionally biased toward basic residues. Disordered regions lie at residues 1-44 (MDKR…HLHQ) and 171-199 (RRKN…QKLI). The residue at position 18 (S18) is a Phosphoserine. Position 238 is a phosphoserine (S238). Disordered regions lie at residues 244–266 (HAGA…GEFN), 358–454 (GQSV…GNQN), 485–691 (KKDK…EIDV), and 729–799 (IYPP…SSTT). A compositionally biased stretch (basic and acidic residues) spans 255–266 (KRSESKGRGEFN). Residues 368-392 (EEDDDEDDEDDENSDKDDDSEEDDY) show a composition bias toward acidic residues. Basic and acidic residues predominate over residues 397–407 (SDADVNARTEE). The span at 431–445 (AHSTPNHQQKSSTQA) shows a compositional bias: polar residues. S433 carries the phosphoserine modification. The residue at position 434 (T434) is a Phosphothreonine. Phosphoserine occurs at positions 492 and 496. Basic and acidic residues-rich tracts occupy residues 504–515 (PHQEDAIVDHNA) and 523–570 (PKPD…DAPK). 2 stretches are compositionally biased toward polar residues: residues 581–592 (TKTSSRESTLPK) and 609–625 (NHQS…TQRL). S585 bears the Phosphoserine mark. Position 659 is a phosphothreonine (T659). A phosphoserine mark is found at S682 and S684. T747 is modified (phosphothreonine). Residue S749 is modified to Phosphoserine. Phosphothreonine is present on residues T750, T751, and T753. The span at 759-768 (QHAVTSSMDQ) shows a compositional bias: polar residues. Phosphoserine is present on residues S764 and S765. T788 carries the phosphothreonine modification. S810 carries the post-translational modification Phosphoserine. Phosphothreonine occurs at positions 813 and 832. The 119-residue stretch at 865-983 (SLEIPKWRDV…EARDDFGVPW (119 aa)) folds into the PEHE domain. A phosphoserine mark is found at S879 and S889. The tract at residues 886 to 904 (ELLSDATFERRHQKYVKDE) is interaction with mof HAT domain. Residues 1011-1039 (IPTTAAEARHQENHSSYVFPKRRKRQKNR) form a disordered region. Phosphothreonine is present on T1014. At S1025 the chain carries Phosphoserine. A compositionally biased stretch (basic residues) spans 1030 to 1039 (PKRRKRQKNR). The short motif at 1032–1037 (RRKRQK) is the Nuclear localization signal element.

It belongs to the msl-1 family. As to quaternary structure, component of the male-specific lethal (MSL) histone acetyltransferase complex, composed of mof, mle, msl-1, msl-2 and msl-3 proteins, as well as roX1 and roX2 non-coding RNAs. Interacts (via PEHE domain) with mof (via HAT domain) and msl-3 (via MRG domain); both interactions are direct. Interacts with tamo via the nuclear localization signal. Component of a maternal MSL subcomplex composed of mof, msl-1 and msl-3. In terms of processing, phosphorylation at Ser-18, Thr743, Thr-747 and Thr-751 is required to promote phosphorylation of 'Ser-5' of the C-terminal heptapeptide repeat domain (CTD) of the largest RNA polymerase II subunit Polr2A. Phosphorylated by Cdk7 in vitro. In contrast, phosphorylation at Ser-18, Thr743, Thr-747 and Thr-751 does not affect its role in dosage compensation in males. Ubiquitinated by msl-2.

The protein localises to the nucleus. The protein resides in the chromosome. In terms of biological role, component of the male-specific lethal (MSL) histone acetyltransferase complex, a multiprotein complex essential for elevating transcription of the single X chromosome in the male (X chromosome dosage compensation). The MSL complex specifically associates with the single X chromosome in males and mediates formation of H4K16ac, promoting a two-fold activation of X chromosome. In complex with msl-2, promotes ubiquitination of histone H2B. In addition to its role in dosage compensation in males, regulates the activity of gene promoters: acts together with Cdk7 to promote phosphorylation of 'Ser-5' of the C-terminal heptapeptide repeat domain (CTD) of the largest RNA polymerase II subunit Polr2A. This is Protein male-specific lethal-1 from Drosophila melanogaster (Fruit fly).